The chain runs to 355 residues: Gentisate 1,2-dioxygenase (355 aa).

In terms of domain architecture, Cupin type-2 spans 106–174 (MQLLLPGEWA…GNEPVVWLDV (69 aa)).

This sequence belongs to the gentisate 1,2-dioxygenase family.

The enzyme catalyses 2,5-dihydroxybenzoate + O2 = 3-maleylpyruvate + H(+). It participates in aromatic compound metabolism; naphthalene degradation. In terms of biological role, catalyzes the oxygen-dependent ring fission of gentisate between the carboxyl and proximal hydroxyl groups at positions 1 and 2 of the aromatic ring to form maleylpyruvate. Can also catalyze oxidation of alkyl- and halogenated gentisates. Exhibits higher affinity for 3-substituted gentisates than for gentisate but has higher activity with gentisate. This is Gentisate 1,2-dioxygenase from Ralstonia sp.